The following is a 198-amino-acid chain: Na(+)-translocating NADH-quinone reductase subunit E (198 aa).

Helical transmembrane passes span 11–31 (AVFV…FLAV), 35–55 (VSTA…SVPA), 77–97 (FLNF…LEMI), 109–129 (LGIF…VSFM), 140–160 (IVYG…LAGI), and 176–196 (LGIT…FSGV).

Belongs to the NqrDE/RnfAE family. Composed of six subunits; NqrA, NqrB, NqrC, NqrD, NqrE and NqrF.

It is found in the cell inner membrane. The enzyme catalyses a ubiquinone + n Na(+)(in) + NADH + H(+) = a ubiquinol + n Na(+)(out) + NAD(+). Functionally, NQR complex catalyzes the reduction of ubiquinone-1 to ubiquinol by two successive reactions, coupled with the transport of Na(+) ions from the cytoplasm to the periplasm. NqrA to NqrE are probably involved in the second step, the conversion of ubisemiquinone to ubiquinol. The protein is Na(+)-translocating NADH-quinone reductase subunit E of Yersinia enterocolitica serotype O:8 / biotype 1B (strain NCTC 13174 / 8081).